Consider the following 545-residue polypeptide: E3 ubiquitin-protein ligase ipaH9.8 (545 aa).

Positions 1–242 are interaction with target proteins; the sequence is MLPINNNFSL…YHGPRIYFSM (242 aa). LRR repeat units follow at residues 57 to 77, 78 to 99, 100 to 117, 118 to 139, 140 to 157, 158 to 179, 182 to 203, and 205 to 228; these read NSDE…NLPA, QITL…PVTL, KKLY…VLPP, ALES…PDSL, LTMN…SLPQ, ALKN…SEGN, VVRE…ILNL, and NECS…QRLT. Residues 243–250 are linker; that stretch reads SDGQQNTL. The tract at residues 251-545 is E3 ubiquitin-protein ligase catalytic domain; it reads HRPLADAVTA…SENGSQLHHS (295 aa). An NEL domain is found at 253–545; sequence PLADAVTAWF…SENGSQLHHS (293 aa). The active-site Glycyl thioester intermediate is the C337.

The protein belongs to the LRR-containing bacterial E3 ligase family. As to quaternary structure, also interacts with human and mouse U2AF1 (U2AF35). In terms of processing, ubiquitinated in the presence of host E1 ubiquitin-activating enzyme, E2 ubiquitin-conjugating enzyme and ubiquitin.

It is found in the secreted. It localises to the host cytoplasm. The protein resides in the host nucleus. The catalysed reaction is S-ubiquitinyl-[E2 ubiquitin-conjugating enzyme]-L-cysteine + [acceptor protein]-L-lysine = [E2 ubiquitin-conjugating enzyme]-L-cysteine + N(6)-ubiquitinyl-[acceptor protein]-L-lysine.. Exists in an autoinhibited state in the absence of substrate protein, due to interactions of the leucine-rich repeats with NEL domain. Is activated upon binding to a substrate protein. Its function is as follows. Effector E3 ubiquitin ligase that interferes with host's ubiquitination pathway and modulates the acute inflammatory responses, thus facilitating bacterial colonization within the host cell. Interacts with IKBKG (NEMO) and TNIP1 (ABIN-1), a ubiquitin-binding adapter protein, which results in TNIP1-dependent 'Lys-27'-linked polyubiquitination of IKBKG. Consequently, polyubiquitinated IKBKG undergoes proteasome-dependent degradation, which perturbs NF-kappa-B activation during bacterial infection. Mediates polyubiquitination of host U2AF1, leading to its proteasomal degradation. Catalyzes 'Lys-48'-linked polyubiquitination and subsequent degradation of a subset of host guanylate-binding proteins (GBP1, GBP2, GBP4 and GBP6), thereby suppressing host cell defense. In contrast, host GBP3 and GBP7 are not ubiquitinated by IpaH9.8. Uses UBE2D2 (UBCH5B) as an E2 ubiquitin-conjugating enzyme. The polypeptide is E3 ubiquitin-protein ligase ipaH9.8 (ipaH9.8) (Shigella sonnei (strain Ss046)).